The chain runs to 274 residues: Orotidine 5'-phosphate decarboxylase (274 aa).

Residue K96 is the Proton donor of the active site.

It belongs to the OMP decarboxylase family. Type 2 subfamily.

It carries out the reaction orotidine 5'-phosphate + H(+) = UMP + CO2. It participates in pyrimidine metabolism; UMP biosynthesis via de novo pathway; UMP from orotate: step 2/2. This chain is Orotidine 5'-phosphate decarboxylase, found in Bacteroides fragilis (strain ATCC 25285 / DSM 2151 / CCUG 4856 / JCM 11019 / LMG 10263 / NCTC 9343 / Onslow / VPI 2553 / EN-2).